Reading from the N-terminus, the 39-residue chain is Cecropin-D-like peptide (39 aa).

In terms of tissue distribution, hemolymph.

The protein resides in the secreted. Its function is as follows. Cecropins have lytic and antibacterial activity against several Gram-positive and Gram-negative bacteria. Has antibacterial activity against the Gram-positive bacteria M.luteus (MIC=34.4 uM), L.monocytogenes (MIC=34.4 uM), and S.lutea (MIC=34.4 uM), and the Gram-negative bacterium E.coli D31 (MIC=8.6 uM). Lacks antibacterial activity against the Gram-positive bacterium B.circulans, and the Gram-negative bacteria E.coli ATCC 25922 and S.typhimurium. Has antifungal activity against A.niger, but lacks antifungal activity against C.albicans, C.wickerhamii, F.oxysporum, P.pastoris, P.tannophilus, S.cerevisiae, T.harzianum, and Z.marxianus. The chain is Cecropin-D-like peptide from Galleria mellonella (Greater wax moth).